Consider the following 465-residue polypeptide: QFKISADRYIKEKSSIAVIGLSVHTAPVDMREKLAVAEELWPRAISELTSLNHIEEAAVLSTCNRMEIYVVALSWNRGIREVVDWMSKKSGIPASELREHLFMLRDSGATRHLFEVSAGLDSLVLGEGQILAQVKQVVRNGQNSGGLGKNIDRMFKDAITAGKRARCETNISAGAVSVSSAAVELAMMKLPKSECLSARMLLIGAGKMGKLVVKHLIAKGCKKVVVVNRSVERVDAIREEMKDIEIVYRPLTEMYEAAADADVVFTSTASESLLFTKEHAEALPPISLAMGGVRLFVDISVPRNVGACLSQVEHARVYNVDDLKEVVEANKEDRVRKAMEAQAIITQELKRFEAWRDSLETVPTIKKLRSYADRIRASELDKCLQKIGEDNLNKKTRRSIEELSTGIVNKLLHGPLQHLRCDGSDSRTLDETLDNMHALNRMFNLDTEKAVLEQKIKAKVEKTQS.

Substrate contacts are provided by residues 62–65 (TCNR), S122, 127–129 (EGQ), and Q133. The active-site Nucleophile is the C63. 204-209 (GAGKMG) serves as a coordination point for NADP(+).

Belongs to the glutamyl-tRNA reductase family.

It localises to the plastid. It is found in the chloroplast. It catalyses the reaction (S)-4-amino-5-oxopentanoate + tRNA(Glu) + NADP(+) = L-glutamyl-tRNA(Glu) + NADPH + H(+). Its pathway is porphyrin-containing compound metabolism; protoporphyrin-IX biosynthesis; 5-aminolevulinate from L-glutamyl-tRNA(Glu): step 1/2. Functionally, catalyzes the NADPH-dependent reduction of glutamyl-tRNA(Glu) to glutamate 1-semialdehyde (GSA). This is Glutamyl-tRNA reductase 2 (HEMA2) from Hordeum vulgare (Barley).